A 65-amino-acid chain; its full sequence is Large ribosomal subunit protein bL33m (65 aa).

It belongs to the bacterial ribosomal protein bL33 family. Component of the mitochondrial ribosome large subunit (39S) which comprises a 16S rRNA and about 50 distinct proteins.

The protein resides in the mitochondrion. The chain is Large ribosomal subunit protein bL33m (mRpL33) from Anopheles gambiae (African malaria mosquito).